A 271-amino-acid chain; its full sequence is Co-chaperone protein DjlA (271 aa).

The Periplasmic segment spans residues 1-6 (MQYWGK). A helical membrane pass occupies residues 7 to 31 (IIGVAVALLMGGGFWGVVLGLLIGH). The Cytoplasmic segment spans residues 32–271 (MFDKARSRKM…ELIKQQKGFK (240 aa)). The region spanning 205-271 (DACNVLGVKP…ELIKQQKGFK (67 aa)) is the J domain.

Homodimer.

It is found in the cell inner membrane. Regulatory DnaK co-chaperone. Direct interaction between DnaK and DjlA is needed for the induction of the wcaABCDE operon, involved in the synthesis of a colanic acid polysaccharide capsule, possibly through activation of the RcsB/RcsC phosphotransfer signaling pathway. The colanic acid capsule may help the bacterium survive conditions outside the host. This chain is Co-chaperone protein DjlA, found in Escherichia coli (strain K12).